A 290-amino-acid polypeptide reads, in one-letter code: Protein male abnormal 3 (290 aa).

DNA-binding regions (DM) lie at residues 28-74 and 94-142; these read CQRC…SKKK and CARC…KLRR. 2 disordered regions span residues 139–167 and 179–202; these read KLRR…MDME and IIGT…LSMS. A compositionally biased stretch (basic and acidic residues) spans 146–155; sequence KSRDGKEPKR. Positions 182–202 are enriched in low complexity; it reads TSASPSPSSTTDTMSPSLSMS.

In terms of tissue distribution, expression is undetectable in hermaphrodites, but persists in males. In males, expressed in cells of the tail tip.

Its subcellular location is the nucleus. In terms of biological role, transcription factor which binds the DNA motif 5'-[CGA][TCA][TA]ACAATGT[AT][TGA]C-3', probably as a monomer. Acts partially redundantly with the transcription factor dmd-3 to coordinate tail tip cell fusion and retraction and thereby regulate male tail tip morphogenesis. Promotes male-specific development of two tissues, the peripheral nervous system and the intestine. In the peripheral nervous system, directs differentiation of sensory ray neuroblasts into peripheral sense organs. In the intestine, causes repression of vitellogenin gene transcription. In Caenorhabditis elegans, this protein is Protein male abnormal 3.